The primary structure comprises 283 residues: Elongation factor Ts (283 aa).

Residues 80–83 form an involved in Mg(2+) ion dislocation from EF-Tu region; the sequence is TDFV.

The protein belongs to the EF-Ts family.

It localises to the cytoplasm. Associates with the EF-Tu.GDP complex and induces the exchange of GDP to GTP. It remains bound to the aminoacyl-tRNA.EF-Tu.GTP complex up to the GTP hydrolysis stage on the ribosome. The sequence is that of Elongation factor Ts from Actinobacillus pleuropneumoniae serotype 3 (strain JL03).